Consider the following 143-residue polypeptide: Endoribonuclease YbeY (143 aa).

Positions 113, 117, and 123 each coordinate Zn(2+).

The protein belongs to the endoribonuclease YbeY family. Zn(2+) is required as a cofactor.

It is found in the cytoplasm. In terms of biological role, single strand-specific metallo-endoribonuclease involved in late-stage 70S ribosome quality control and in maturation of the 3' terminus of the 16S rRNA. The protein is Endoribonuclease YbeY of Elusimicrobium minutum (strain Pei191).